The primary structure comprises 252 residues: Triosephosphate isomerase (252 aa).

10 to 12 (NWK) is a binding site for substrate. Histidine 96 functions as the Electrophile in the catalytic mechanism. Glutamate 168 (proton acceptor) is an active-site residue. Substrate is bound by residues glycine 174, serine 213, and 234-235 (GG).

This sequence belongs to the triosephosphate isomerase family. Homodimer.

Its subcellular location is the cytoplasm. It catalyses the reaction D-glyceraldehyde 3-phosphate = dihydroxyacetone phosphate. It participates in carbohydrate biosynthesis; gluconeogenesis. The protein operates within carbohydrate degradation; glycolysis; D-glyceraldehyde 3-phosphate from glycerone phosphate: step 1/1. Involved in the gluconeogenesis. Catalyzes stereospecifically the conversion of dihydroxyacetone phosphate (DHAP) to D-glyceraldehyde-3-phosphate (G3P). This chain is Triosephosphate isomerase, found in Nitrosomonas europaea (strain ATCC 19718 / CIP 103999 / KCTC 2705 / NBRC 14298).